Consider the following 425-residue polypeptide: Multifunctional CCA protein (425 aa).

The ATP site is built by Gly-8 and Arg-11. Residues Gly-8 and Arg-11 each contribute to the CTP site. Mg(2+) is bound by residues Asp-21 and Asp-23. Positions 91, 141, and 144 each coordinate ATP. CTP is bound by residues Arg-91, Arg-141, and Arg-144. One can recognise an HD domain in the interval 230–331 (TGVHLMMVLD…VRLLERCDAI (102 aa)).

The protein belongs to the tRNA nucleotidyltransferase/poly(A) polymerase family. Bacterial CCA-adding enzyme type 1 subfamily. Monomer. Can also form homodimers and oligomers. Requires Mg(2+) as cofactor. It depends on Ni(2+) as a cofactor.

The catalysed reaction is a tRNA precursor + 2 CTP + ATP = a tRNA with a 3' CCA end + 3 diphosphate. It carries out the reaction a tRNA with a 3' CCA end + 2 CTP + ATP = a tRNA with a 3' CCACCA end + 3 diphosphate. Catalyzes the addition and repair of the essential 3'-terminal CCA sequence in tRNAs without using a nucleic acid template. Adds these three nucleotides in the order of C, C, and A to the tRNA nucleotide-73, using CTP and ATP as substrates and producing inorganic pyrophosphate. tRNA 3'-terminal CCA addition is required both for tRNA processing and repair. Also involved in tRNA surveillance by mediating tandem CCA addition to generate a CCACCA at the 3' terminus of unstable tRNAs. While stable tRNAs receive only 3'-terminal CCA, unstable tRNAs are marked with CCACCA and rapidly degraded. The chain is Multifunctional CCA protein from Acidovorax sp. (strain JS42).